The chain runs to 104 residues: Large ribosomal subunit protein uL24 (104 aa).

The interval 82 to 104 (RVGYRFDENGKKVRVSRRNGKDI) is disordered. Over residues 93–104 (KVRVSRRNGKDI) the composition is skewed to basic residues.

The protein belongs to the universal ribosomal protein uL24 family. Part of the 50S ribosomal subunit.

In terms of biological role, one of two assembly initiator proteins, it binds directly to the 5'-end of the 23S rRNA, where it nucleates assembly of the 50S subunit. One of the proteins that surrounds the polypeptide exit tunnel on the outside of the subunit. The sequence is that of Large ribosomal subunit protein uL24 from Corynebacterium glutamicum (strain R).